We begin with the raw amino-acid sequence, 601 residues long: Glutathione-regulated potassium-efflux system protein KefB (601 aa).

13 helical membrane passes run 5-25 (SLLMAGLLYLCAAVIAVPLAA), 29-49 (IGAVLGYLLAGIAIGPWGLGF), 55-75 (EILHFSELGVVFLMFIIGLEL), 87-107 (IFGVGAAQVLLSAAVLGGLLW), 115-135 (AAIIGGIGLAMSSTAMALQLM), 152-172 (VLLFQDLAVIPALALVPLLAG), 180-202 (WMKLGMKVLAFAGMLVGGRYLLR), 207-227 (FIAASGVREVFTAAALLLVLG), 230-250 (LFMEALGLSMALGTFIAGILL), 268-288 (GLLLGLFFISVGMALNLGVLY), 291-311 (ILEILAGVVMLVTVKTAVLYL), 324-344 (LQFSGVLSQGGEFAFVLFSAA), and 356-376 (PLLLVTVTLSMMTTPLLMQGV). Residues 400 to 519 (KPQVIVVGFG…AGVTQFSRET (120 aa)) form the RCK N-terminal domain.

The protein belongs to the monovalent cation:proton antiporter 2 (CPA2) transporter (TC 2.A.37) family. KefB subfamily. Interacts with the regulatory subunit KefG.

The protein localises to the cell inner membrane. Pore-forming subunit of a potassium efflux system that confers protection against electrophiles. Catalyzes K(+)/H(+) antiport. The protein is Glutathione-regulated potassium-efflux system protein KefB of Erwinia tasmaniensis (strain DSM 17950 / CFBP 7177 / CIP 109463 / NCPPB 4357 / Et1/99).